The following is a 130-amino-acid chain: Small ribosomal subunit protein uS9 (130 aa).

Residues 109–130 (RKKERKKYGQRAARARFQYSKR) form a disordered region.

The protein belongs to the universal ribosomal protein uS9 family.

This Oleidesulfovibrio alaskensis (strain ATCC BAA-1058 / DSM 17464 / G20) (Desulfovibrio alaskensis) protein is Small ribosomal subunit protein uS9.